Here is an 837-residue protein sequence, read N- to C-terminus: Tuftelin-interacting protein 11 (837 aa).

Positions 1-13 (MSLSHLYRDGEGH) are enriched in basic and acidic residues. 3 disordered regions span residues 1–31 (MSLSHLYRDGEGHMDDDDDERENFEITDWDL), 54–73 (WAERDSDEERPSFGGKRARD), and 85–133 (LKKG…KGFA). Positions 1 to 50 (MSLSHLYRDGEGHMDDDDDERENFEITDWDLQNEFNPNRQRHWQTKEEAT) are required for interaction with DHX15. Ser2 carries the phosphoserine modification. Residues 14-28 (MDDDDDERENFEITD) show a composition bias toward acidic residues. Residues 54–64 (WAERDSDEERP) are compositionally biased toward basic and acidic residues. Phosphoserine is present on residues Ser59 and Ser98. Positions 91–102 (EEAELEDSEDEE) are enriched in acidic residues. Positions 103 to 116 (KPVKQDDFPKDFGP) are enriched in basic and acidic residues. A Phosphoserine modification is found at Ser144. Residues 149–195 (TKGIGQKLLQKMGYVPGRGLGKNAQGIINPIEAKQRKGKGAVGAYGS) enclose the G-patch domain. Disordered regions lie at residues 183–236 (QRKG…KKKP) and 289–312 (HNVPDDGLPLPSQQPPQPGKEAKA). Phosphoserine is present on Ser210. Over residues 217-231 (EFQKELSQWRKDPSG) the composition is skewed to basic and acidic residues. The Nuclear localization signal motif lies at 700–705 (VKDKFN). The tract at residues 710–734 (IMNRAVSSNVGAYMQPGARENIAYL) is required for nuclear speckle localization.

Belongs to the TFP11/STIP family. As to quaternary structure, identified in the spliceosome C complex. Found in the Intron Large (IL) complex, a post-mRNA release spliceosomal complex containing the excised intron, U2, U5 and U6 snRNPs, and splicing factors. Interacts with TUFT1. Interacts with DHX15; indicative for a recruitment of DHX15 to the IL complex. Interacts with GCFC2.

Its subcellular location is the cytoplasm. The protein localises to the nucleus. Its function is as follows. Involved in pre-mRNA splicing, specifically in spliceosome disassembly during late-stage splicing events. Intron turnover seems to proceed through reactions in two lariat-intron associated complexes termed Intron Large (IL) and Intron Small (IS). In cooperation with DHX15 seems to mediate the transition of the U2, U5 and U6 snRNP-containing IL complex to the snRNP-free IS complex leading to efficient debranching and turnover of excised introns. May play a role in the differentiation of ameloblasts and odontoblasts or in the forming of the enamel extracellular matrix. The protein is Tuftelin-interacting protein 11 (TFIP11) of Canis lupus familiaris (Dog).